The sequence spans 733 residues: Arginine decarboxylase 1A, chloroplastic (733 aa).

The N-terminal 44 residues, 1–44, are a transit peptide targeting the chloroplast; it reads MPALGCCVDAAVSPPPGYSFLWDSSLPAPEIFPSGVPPSTNTAV. Lys-157 is subject to N6-(pyridoxal phosphate)lysine. Pyridoxal 5'-phosphate is bound by residues Ser-309, Gly-346, and 395–398; that span reads ESGR. 460–461 contacts substrate; the sequence is YA. Cys-548 serves as the catalytic Proton donor; shared with dimeric partner. Asp-549 serves as a coordination point for substrate. Tyr-592 provides a ligand contact to pyridoxal 5'-phosphate.

This sequence belongs to the Orn/Lys/Arg decarboxylase class-II family. SpeA subfamily. Interacts, via its C-terminal internal region, with the tobacco mosaic virus (TMV) replicase helicase region. Mg(2+) is required as a cofactor. The cofactor is pyridoxal 5'-phosphate.

Its subcellular location is the plastid. The protein resides in the chloroplast. The catalysed reaction is L-arginine + H(+) = agmatine + CO2. It participates in alkaloid biosynthesis; nicotine biosynthesis. The protein operates within amine and polyamine biosynthesis; agmatine biosynthesis; agmatine from L-arginine: step 1/1. In terms of biological role, involved in the biosynthesis of pyridine alkaloid natural products, leading mainly to the production of anabasine, anatabine, nicotine and nornicotine, effective deterrents against herbivores with antiparasitic and pesticide properties (neurotoxins); nornicotine serves as the precursor in the synthesis of the carcinogen compound N'-nitrosonornicotine (NNN). Required for the biosynthesis of putrescine. Catalyzes the first step of polyamine (PA) biosynthesis to produce putrescine from arginine. The sequence is that of Arginine decarboxylase 1A, chloroplastic from Nicotiana tabacum (Common tobacco).